A 181-amino-acid chain; its full sequence is Oligoribonuclease (181 aa).

Residues 8–171 form the Exonuclease domain; it reads LIWIDLEMTG…LDIQESIAEL (164 aa). Residue Tyr129 is part of the active site.

The protein belongs to the oligoribonuclease family.

It localises to the cytoplasm. In terms of biological role, 3'-to-5' exoribonuclease specific for small oligoribonucleotides. The polypeptide is Oligoribonuclease (Shewanella amazonensis (strain ATCC BAA-1098 / SB2B)).